A 108-amino-acid polypeptide reads, in one-letter code: Large ribosomal subunit protein uL24 (108 aa).

This sequence belongs to the universal ribosomal protein uL24 family. In terms of assembly, part of the 50S ribosomal subunit.

In terms of biological role, one of two assembly initiator proteins, it binds directly to the 5'-end of the 23S rRNA, where it nucleates assembly of the 50S subunit. One of the proteins that surrounds the polypeptide exit tunnel on the outside of the subunit. The chain is Large ribosomal subunit protein uL24 from Desulfosudis oleivorans (strain DSM 6200 / JCM 39069 / Hxd3) (Desulfococcus oleovorans).